A 390-amino-acid polypeptide reads, in one-letter code: Chorismate synthase (390 aa).

NADP(+) is bound by residues R39 and R45. Residues 132 to 134 (RSS), 253 to 254 (NA), G298, 313 to 317 (KPIPT), and R339 each bind FMN.

This sequence belongs to the chorismate synthase family. Homotetramer. Requires FMNH2 as cofactor.

The catalysed reaction is 5-O-(1-carboxyvinyl)-3-phosphoshikimate = chorismate + phosphate. The protein operates within metabolic intermediate biosynthesis; chorismate biosynthesis; chorismate from D-erythrose 4-phosphate and phosphoenolpyruvate: step 7/7. In terms of biological role, catalyzes the anti-1,4-elimination of the C-3 phosphate and the C-6 proR hydrogen from 5-enolpyruvylshikimate-3-phosphate (EPSP) to yield chorismate, which is the branch point compound that serves as the starting substrate for the three terminal pathways of aromatic amino acid biosynthesis. This reaction introduces a second double bond into the aromatic ring system. The protein is Chorismate synthase of Bacillus cytotoxicus (strain DSM 22905 / CIP 110041 / 391-98 / NVH 391-98).